The chain runs to 515 residues: Microtubule-associated protein 70-4 (515 aa).

Coiled coils occupy residues 26–106 and 136–351; these read VVDE…ALSA and LESD…NTSA. A required for targeting to microtubules region spans residues 208 to 410; sequence LLEKSNRQQV…KQPGSETEAA (203 aa). The disordered stretch occupies residues 340–515; the sequence is DDMRNESSNT…VKSTKDSCEI (176 aa). Residues 345–362 are compositionally biased toward polar residues; sequence ESSNTSASNKDNATSKQA. A compositionally biased stretch (low complexity) spans 364-374; the sequence is PKRSSSQPRRP. 3 stretches are compositionally biased toward basic and acidic residues: residues 409–425, 450–461, and 484–515; these read AAEK…DSPR, KVADDAGKENKE, and SEHE…SCEI.

The protein belongs to the MAP70 family.

It is found in the cytoplasm. The protein localises to the cytoskeleton. In terms of biological role, plant-specific protein that interact with microtubules. The polypeptide is Microtubule-associated protein 70-4 (MAP70.4) (Oryza sativa subsp. japonica (Rice)).